Consider the following 278-residue polypeptide: MKYWNLKRTNQSTFEKVGPIPRSITNTFEKFRKELDPNGESEAIEEFRLSRHQTITSVKYIFLLLISPVLVNQASKFFDFGPCIDYLWNQEQPKIFINSSQEERAFAELQRFEEKIHFEVLLNPSGNISYEIIEKRVQLKARELGEYYANESANAVKNILSDILSIAVFILLMITGQRQISIVKSFLNEIIYGLSDTAKAFLIILFTDMFVGFHSPHGWEVIIEVILRHLGLPESRDFIFLFISTFPVILDTIFKYWIFRYLNQVSPSAVATYHNMNE.

4 helical membrane passes run 61 to 81 (IFLL…FDFG), 155 to 175 (AVKN…LMIT), 203 to 223 (IILF…EVII), and 238 to 258 (FIFL…KYWI).

It belongs to the CemA family.

It is found in the plastid. The protein resides in the chloroplast inner membrane. The catalysed reaction is K(+)(in) + H(+)(out) = K(+)(out) + H(+)(in). In terms of biological role, contributes to K(+)/H(+) antiport activity by supporting proton efflux to control proton extrusion and homeostasis in chloroplasts in a light-dependent manner to modulate photosynthesis. Prevents excessive induction of non-photochemical quenching (NPQ) under continuous-light conditions. Indirectly promotes efficient inorganic carbon uptake into chloroplasts. This Porphyra purpurea (Red seaweed) protein is Potassium/proton antiporter CemA.